We begin with the raw amino-acid sequence, 195 residues long: Apoptosis-associated speck-like protein containing a CARD (195 aa).

The Pyrin domain occupies 1–91 (MGRARDAILD…AGQLQAATHQ (91 aa)). Residues Lys-55 and Lys-174 each participate in a glycyl lysine isopeptide (Lys-Gly) (interchain with G-Cter in ubiquitin) cross-link. In terms of domain architecture, CARD spans 107–195 (AAKPGLHFID…SYLVEDLERS (89 aa)). Ser-195 is modified (phosphoserine).

In terms of assembly, self-associates; enforced oligomerization induces apoptosis, NF-kappa-B regulation and interleukin-1 beta secretion. Homooligomers can form disk-like particles of approximately 12 nm diameter and approximately 1 nm height. Next to isoform 1, also isoform 2 and isoform 3 may be involved in oligomerization leading to functional regulation. Component of several inflammasomes containing one pattern recognition receptor/sensor, such as NLRP1, NLRP2, NLRP3, NLRP6, NLRC4, AIM2, MEFV or NOD2, and probably NLRC4, NLRP12 or IFI16. Major component of the ASC pyroptosome, a 1-2 um supramolecular assembly (one per macrophage cell) which consists of oligomerized PYCARD dimers and CASP1. Interacts with CASP1 (precursor form); the interaction induces activation of CASP1 leading to the processing of interleukin-1 beta; PYCARD competes with RIPK2 for binding to CASP1. Interacts with NLRP3; the interaction requires the homooligomerization of NLRP3. Interacts with NLRP2, NLRC4, MEFV, CARD16, AIM2, IFI16, NOD2, RIGI, RIPK2, PYDC1, PYDC2, NLRP10, CASP8, CHUK, IKBKB and BAX. Component of the AIM2 PANoptosome complex, a multiprotein complex that drives inflammatory cell death (PANoptosis). Phosphorylated. Post-translationally, 'Lys-63'-linked polyubiquitination by TRAF3 is critical for speck formation and inflammasome activation. 'Lys-63'-linked deubiquitinated by USP50; a crucial step for NLRP3-mediated inflammasome activation. 'Lys-63'-linked polyubiquitination by PELI1 is also critical for speck formation and inflammasome activation. Deubiquitinated by USP3 that cleaves 'Lys-48'-linked ubiquitin chains and strengthens its stability by blocking proteasomal degradation. Widely expressed at low levels. Detected in peripheral blood leukocytes, lung, small intestine, spleen, thymus, colon and at lower levels in placenta, liver and kidney. Very low expression in skeletal muscle, heart and brain. Expressed in lung epithelial cells (at protein level). Detected in the leukemia cell lines HL-60 and U-937, but not in Jurkat T-cell lymphoma and Daudi Burkitt's lymphoma. Detected in the melanoma cell line WM35, but not in WM793. Not detected in HeLa cervical carcinoma cells and MOLT-4 lymphocytic leukemia cells.

The protein resides in the cytoplasm. The protein localises to the inflammasome. It is found in the endoplasmic reticulum. Its subcellular location is the mitochondrion. It localises to the nucleus. The protein resides in the golgi apparatus membrane. Functionally, functions as a key mediator in apoptosis and inflammation. Promotes caspase-mediated apoptosis involving predominantly caspase-8 and also caspase-9 in a probable cell type-specific manner. Involved in activation of the mitochondrial apoptotic pathway, promotes caspase-8-dependent proteolytic maturation of BID independently of FADD in certain cell types and also mediates mitochondrial translocation of BAX and activates BAX-dependent apoptosis coupled to activation of caspase-9, -2 and -3. Involved in innate immune response by acting as an integral adapter in the assembly of various inflammasomes (NLRP1, NLRP2, NLRP3, NLRP6, AIM2 and probably IFI16) which recruit and activate caspase-1 leading to processing and secretion of pro-inflammatory cytokines. Caspase-1-dependent inflammation leads to macrophage pyroptosis, a form of cell death. The function as activating adapter in different types of inflammasomes is mediated by the pyrin and CARD domains and their homotypic interactions. Clustered PYCARD nucleates the formation of caspase-1 filaments through the interaction of their respective CARD domains, acting as a platform for of caspase-1 polymerization. In the NLRP1 and NLRC4 inflammasomes seems not be required but facilitates the processing of procaspase-1. In cooperation with NOD2 involved in an inflammasome activated by bacterial muramyl dipeptide leading to caspase-1 activation. May be involved in RIGI-triggered pro-inflammatory responses and inflammasome activation. In collaboration with AIM2 which detects cytosolic double-stranded DNA may also be involved in a caspase-1-independent cell death that involves caspase-8. In adaptive immunity may be involved in maturation of dendritic cells to stimulate T-cell immunity and in cytoskeletal rearrangements coupled to chemotaxis and antigen uptake may be involved in post-transcriptional regulation of the guanine nucleotide exchange factor DOCK2; the latter function is proposed to involve the nuclear form. Also involved in transcriptional activation of cytokines and chemokines independent of the inflammasome; this function may involve AP-1, NF-kappa-B, MAPK and caspase-8 signaling pathways. For regulation of NF-kappa-B activating and inhibiting functions have been reported. Modulates NF-kappa-B induction at the level of the IKK complex by inhibiting kinase activity of CHUK and IKBK. Proposed to compete with RIPK2 for association with CASP1 thereby down-regulating CASP1-mediated RIPK2-dependent NF-kappa-B activation and activating interleukin-1 beta processing. Modulates host resistance to DNA virus infection, probably by inducing the cleavage of and inactivating CGAS in presence of cytoplasmic double-stranded DNA. In terms of biological role, may have a regulating effect on the function as inflammasome adapter. Its function is as follows. Seems to inhibit inflammasome-mediated maturation of interleukin-1 beta. This is Apoptosis-associated speck-like protein containing a CARD from Homo sapiens (Human).